The primary structure comprises 235 residues: Putative N-acetylmannosamine-6-phosphate 2-epimerase (235 aa).

This sequence belongs to the NanE family.

The catalysed reaction is an N-acyl-D-glucosamine 6-phosphate = an N-acyl-D-mannosamine 6-phosphate. It participates in amino-sugar metabolism; N-acetylneuraminate degradation; D-fructose 6-phosphate from N-acetylneuraminate: step 3/5. Its function is as follows. Converts N-acetylmannosamine-6-phosphate (ManNAc-6-P) to N-acetylglucosamine-6-phosphate (GlcNAc-6-P). The sequence is that of Putative N-acetylmannosamine-6-phosphate 2-epimerase from Edwardsiella ictaluri (strain 93-146).